Reading from the N-terminus, the 324-residue chain is CIMIP2 protein GA14893 (324 aa).

This sequence belongs to the CIMIP2 family.

The protein localises to the cytoplasm. It localises to the cytoskeleton. The protein resides in the cilium axoneme. Probable microtubule inner protein (MIP) part of the dynein-decorated doublet microtubules (DMTs) in cilium axoneme. The polypeptide is CIMIP2 protein GA14893 (Drosophila pseudoobscura pseudoobscura (Fruit fly)).